Consider the following 370-residue polypeptide: 3-dehydroquinate synthase (370 aa).

NAD(+) contacts are provided by residues 107–111 (GVIGD), 131–132 (TS), lysine 144, and lysine 153. The Zn(2+) site is built by glutamate 186, histidine 249, and histidine 267.

This sequence belongs to the sugar phosphate cyclases superfamily. Dehydroquinate synthase family. The cofactor is Co(2+). Requires Zn(2+) as cofactor. It depends on NAD(+) as a cofactor.

The protein resides in the cytoplasm. It carries out the reaction 7-phospho-2-dehydro-3-deoxy-D-arabino-heptonate = 3-dehydroquinate + phosphate. It functions in the pathway metabolic intermediate biosynthesis; chorismate biosynthesis; chorismate from D-erythrose 4-phosphate and phosphoenolpyruvate: step 2/7. Functionally, catalyzes the conversion of 3-deoxy-D-arabino-heptulosonate 7-phosphate (DAHP) to dehydroquinate (DHQ). The polypeptide is 3-dehydroquinate synthase (Roseobacter denitrificans (strain ATCC 33942 / OCh 114) (Erythrobacter sp. (strain OCh 114))).